Consider the following 394-residue polypeptide: 1-deoxy-D-xylulose 5-phosphate reductoisomerase (394 aa).

NADPH is bound by residues threonine 10, glycine 11, serine 12, isoleucine 13, asparagine 38, and asparagine 125. Residue lysine 126 participates in 1-deoxy-D-xylulose 5-phosphate binding. An NADPH-binding site is contributed by glutamate 127. Aspartate 151 is a Mn(2+) binding site. 1-deoxy-D-xylulose 5-phosphate contacts are provided by serine 152, glutamate 153, serine 182, and histidine 205. Position 153 (glutamate 153) interacts with Mn(2+). Glycine 211 lines the NADPH pocket. The 1-deoxy-D-xylulose 5-phosphate site is built by serine 218, asparagine 223, lysine 224, and glutamate 227. Glutamate 227 contributes to the Mn(2+) binding site.

This sequence belongs to the DXR family. Mg(2+) serves as cofactor. The cofactor is Mn(2+).

The catalysed reaction is 2-C-methyl-D-erythritol 4-phosphate + NADP(+) = 1-deoxy-D-xylulose 5-phosphate + NADPH + H(+). It participates in isoprenoid biosynthesis; isopentenyl diphosphate biosynthesis via DXP pathway; isopentenyl diphosphate from 1-deoxy-D-xylulose 5-phosphate: step 1/6. Catalyzes the NADPH-dependent rearrangement and reduction of 1-deoxy-D-xylulose-5-phosphate (DXP) to 2-C-methyl-D-erythritol 4-phosphate (MEP). The chain is 1-deoxy-D-xylulose 5-phosphate reductoisomerase from Methylococcus capsulatus (strain ATCC 33009 / NCIMB 11132 / Bath).